Here is a 495-residue protein sequence, read N- to C-terminus: Flagellin (495 aa).

The protein belongs to the bacterial flagellin family.

It localises to the secreted. Its subcellular location is the bacterial flagellum. In terms of biological role, flagellin is the subunit protein which polymerizes to form the filaments of bacterial flagella. This is Flagellin (fliC) from Salmonella typhimurium (strain LT2 / SGSC1412 / ATCC 700720).